The chain runs to 330 residues: MALSVYYDKDIDLGVIQSLQVGIIGYGTQGEAQALNLRDSKVKVRVGLYQGSLSIPKAKAEGFEVLEVKELVQKSDVIMALLPDELHKEVLEKEVIPFLKEGQIVGFAHGFSVHFNQVSFKKGVGVILVAPKGPGSALREEYLKNKGLYHLIAIEQENSKNNAKAVALSYAKAMGGGRMGVLETSFKEECESDLFGEQAVLCGGLEAVVRMGFETLIKAGYPEELAYFECVHEVKLVADLLHYKGVEGLRKHISNTAEFGAIKAREPMENLLEKRMQKILKKIQNGSFAKDFLLEKSLNYPRLNTERKALKETKIEQVGEILRTPFNHEK.

One can recognise a KARI N-terminal Rossmann domain in the interval 3 to 184 (LSVYYDKDID…GGGRMGVLET (182 aa)). Residues 26-29 (YGTQ), S52, and S54 each bind NADP(+). The active site involves H109. G135 is an NADP(+) binding site. In terms of domain architecture, KARI C-terminal knotted spans 185 to 329 (SFKEECESDL…EILRTPFNHE (145 aa)). Mg(2+)-binding residues include D193, E197, E229, and E233. S254 contacts substrate.

This sequence belongs to the ketol-acid reductoisomerase family. Mg(2+) is required as a cofactor.

It catalyses the reaction (2R)-2,3-dihydroxy-3-methylbutanoate + NADP(+) = (2S)-2-acetolactate + NADPH + H(+). The enzyme catalyses (2R,3R)-2,3-dihydroxy-3-methylpentanoate + NADP(+) = (S)-2-ethyl-2-hydroxy-3-oxobutanoate + NADPH + H(+). Its pathway is amino-acid biosynthesis; L-isoleucine biosynthesis; L-isoleucine from 2-oxobutanoate: step 2/4. It functions in the pathway amino-acid biosynthesis; L-valine biosynthesis; L-valine from pyruvate: step 2/4. Involved in the biosynthesis of branched-chain amino acids (BCAA). Catalyzes an alkyl-migration followed by a ketol-acid reduction of (S)-2-acetolactate (S2AL) to yield (R)-2,3-dihydroxy-isovalerate. In the isomerase reaction, S2AL is rearranged via a Mg-dependent methyl migration to produce 3-hydroxy-3-methyl-2-ketobutyrate (HMKB). In the reductase reaction, this 2-ketoacid undergoes a metal-dependent reduction by NADPH to yield (R)-2,3-dihydroxy-isovalerate. This Helicobacter acinonychis (strain Sheeba) protein is Ketol-acid reductoisomerase (NADP(+)).